The following is a 263-amino-acid chain: Probable ABC transporter permease protein ycf63 (263 aa).

The next 5 helical transmembrane spans lie at 43–63, 70–89, 150–170, 188–208, and 230–250; these read IVGPGSLNITLLTACFISMVF, EFLYLDAASAIGAVIVIAFT, ILSIISLTASIAISLFVAFVM, ISDFLICLEKSMFFAIIIGFI, and SVVTILFTVFITDFVLSYFMF.

The protein belongs to the MlaE permease family.

It is found in the plastid. It localises to the chloroplast membrane. Its function is as follows. Could be part of an ABC transporter complex. The protein is Probable ABC transporter permease protein ycf63 (ycf63) of Pyropia yezoensis (Susabi-nori).